The chain runs to 127 residues: Large ribosomal subunit protein bL17 (127 aa).

This sequence belongs to the bacterial ribosomal protein bL17 family. In terms of assembly, part of the 50S ribosomal subunit. Contacts protein L32.

The protein is Large ribosomal subunit protein bL17 of Salmonella paratyphi A (strain AKU_12601).